Reading from the N-terminus, the 234-residue chain is Small ribosomal subunit protein uS2 (234 aa).

It belongs to the universal ribosomal protein uS2 family.

The protein is Small ribosomal subunit protein uS2 of Prochlorococcus marinus (strain MIT 9515).